Consider the following 984-residue polypeptide: Respiratory nitrate reductase subunit alpha (984 aa).

Residues 1–43 (MSRNDASQLDDGETTAESPPDDQANDAPEVGDPPGDPVDADSG) are disordered. Positions 8 to 24 (QLDDGETTAESPPDDQA) are enriched in acidic residues. In terms of domain architecture, 4Fe-4S Mo/W bis-MGD-type spans 103–167 (DSVSRSTHSV…CYTDYVNADQ (65 aa)). [4Fe-4S] cluster is bound by residues His-110, Cys-114, Cys-118, and Cys-153. Asp-249 is a binding site for Mo-bis(molybdopterin guanine dinucleotide).

It belongs to the prokaryotic molybdopterin-containing oxidoreductase family. Probable multiprotein complex; a catalytic heterodimer of an alpha and beta chain is proposed to associate with additional subunits involved in membrane attachment and electron transfer. Requires [4Fe-4S] cluster as cofactor. Mo-bis(molybdopterin guanine dinucleotide) serves as cofactor. Post-translationally, exported by the Tat system.

Its subcellular location is the cell membrane. The catalysed reaction is nitrate + a quinol = a quinone + nitrite + H2O. Inhibited by cyanide, azide and antimycin A. Enzyme stability is not dependent on salt concentration. The respiratory membrane-bound nitrate reductase enzyme complex plays a role in generation of metabolic energy by using nitrate as a terminal electron acceptor during anaerobic conditions. The alpha chain is the actual site of nitrate reduction. The protein is Respiratory nitrate reductase subunit alpha (narG) of Haloferax mediterranei (strain ATCC 33500 / DSM 1411 / JCM 8866 / NBRC 14739 / NCIMB 2177 / R-4) (Halobacterium mediterranei).